Here is a 347-residue protein sequence, read N- to C-terminus: S-adenosylmethionine decarboxylase proenzyme (347 aa).

Active-site residues include Glu10 and Glu13. The active-site Schiff-base intermediate with substrate; via pyruvic acid is Ser66. Ser66 carries the post-translational modification Pyruvic acid (Ser); by autocatalysis. Residue Cys80 is the Proton donor; for catalytic activity of the active site. Catalysis depends on proton acceptor; for processing activity residues Ser237 and His251.

Belongs to the eukaryotic AdoMetDC family. Pyruvate serves as cofactor. Post-translationally, is synthesized initially as an inactive proenzyme. Formation of the active enzyme involves a self-maturation process in which the active site pyruvoyl group is generated from an internal serine residue via an autocatalytic post-translational modification. Two non-identical subunits are generated from the proenzyme in this reaction, and the pyruvate is formed at the N-terminus of the alpha chain, which is derived from the carboxyl end of the proenzyme. The post-translation cleavage follows an unusual pathway, termed non-hydrolytic serinolysis, in which the side chain hydroxyl group of the serine supplies its oxygen atom to form the C-terminus of the beta chain, while the remainder of the serine residue undergoes an oxidative deamination to produce ammonia and the pyruvoyl group blocking the N-terminus of the alpha chain.

It catalyses the reaction S-adenosyl-L-methionine + H(+) = S-adenosyl 3-(methylsulfanyl)propylamine + CO2. Its pathway is amine and polyamine biosynthesis; S-adenosylmethioninamine biosynthesis; S-adenosylmethioninamine from S-adenosyl-L-methionine: step 1/1. In Drosophila melanogaster (Fruit fly), this protein is S-adenosylmethionine decarboxylase proenzyme (SamDC).